Reading from the N-terminus, the 311-residue chain is Ribosomal RNA small subunit methyltransferase H (311 aa).

Residues 32 to 34 (AGH), Asp-52, Phe-79, Asp-100, and Gln-107 each bind S-adenosyl-L-methionine. Over residues 289–298 (SKEELEENNR) the composition is skewed to basic and acidic residues. The interval 289–311 (SKEELEENNRARSAKLRIAEKRK) is disordered. Basic residues predominate over residues 300–311 (RSAKLRIAEKRK).

This sequence belongs to the methyltransferase superfamily. RsmH family.

Its subcellular location is the cytoplasm. It catalyses the reaction cytidine(1402) in 16S rRNA + S-adenosyl-L-methionine = N(4)-methylcytidine(1402) in 16S rRNA + S-adenosyl-L-homocysteine + H(+). Its function is as follows. Specifically methylates the N4 position of cytidine in position 1402 (C1402) of 16S rRNA. In Bacillus velezensis (strain DSM 23117 / BGSC 10A6 / LMG 26770 / FZB42) (Bacillus amyloliquefaciens subsp. plantarum), this protein is Ribosomal RNA small subunit methyltransferase H.